The primary structure comprises 240 residues: Dihydromonapterin reductase (240 aa).

The Proton acceptor role is filled by Tyr-152.

This sequence belongs to the short-chain dehydrogenases/reductases (SDR) family. FolM subfamily.

The catalysed reaction is (6S)-5,6,7,8-tetrahydrofolate + NADP(+) = 7,8-dihydrofolate + NADPH + H(+). It carries out the reaction 7,8-dihydromonapterin + NADPH + H(+) = 5,6,7,8-tetrahydromonapterin + NADP(+). Functionally, catalyzes the reduction of dihydromonapterin to tetrahydromonapterin. Also has lower activity with dihydrofolate. This Shigella flexneri serotype 5b (strain 8401) protein is Dihydromonapterin reductase (folM).